The chain runs to 242 residues: MANPDTIFSTPIDKIGDFTFDERVAEVFPDMIQRSIPGYSNIISAIGMLAERYAKPHSNVYDLGCSLGAATLSMRRSINQEGCQIIGVDNSSAMVERCRLLVNAYRSDTPVTILEADIRDVDIQDASVVVLNFTLQFLAPADRHALLEKIYAGLRPGGILILSEKYIFEDENANELLIDLHHDFKRANGYSELEISQKRSAIENVMLPDTIDVHKKRFNDIGFKSSEVWFQCFNFGSMFAIK.

Residues Y39, 64-66 (GCS), 89-90 (DN), 117-118 (DI), N132, and R199 contribute to the S-adenosyl-L-methionine site.

It belongs to the class I-like SAM-binding methyltransferase superfamily. Cx-SAM synthase family. Homodimer.

It catalyses the reaction prephenate + S-adenosyl-L-methionine = carboxy-S-adenosyl-L-methionine + 3-phenylpyruvate + H2O. Catalyzes the conversion of S-adenosyl-L-methionine (SAM) to carboxy-S-adenosyl-L-methionine (Cx-SAM). This is Carboxy-S-adenosyl-L-methionine synthase from Aliivibrio fischeri (strain MJ11) (Vibrio fischeri).